The sequence spans 282 residues: Cholesterol 25-hydroxylase-like protein 1, member 1 (282 aa).

The N-linked (GlcNAc...) asparagine glycan is linked to asparagine 3. A run of 3 helical transmembrane segments spans residues 40–60, 85–107, and 127–147; these read FFPVLLAFSSYIIFSVPFAVL, MLRTLWTAVYNHLVFVLPAVLIT, and FSGGLGALLVFDTQYFLWHMV. The Fatty acid hydroxylase domain maps to 133–265; the sequence is ALLVFDTQYF…FSHWDKIFGT (133 aa). The short motif at 144 to 148 is the Histidine box-1 element; the sequence is WHMVH. A Histidine box-2 motif is present at residues 159–163; sequence HAIHH. The short motif at 240–246 is the Histidine box-3 element; the sequence is AHDMHHQ.

The protein belongs to the sterol desaturase family. Fe cation is required as a cofactor.

Its subcellular location is the endoplasmic reticulum membrane. In terms of biological role, may catalyze the formation of 25-hydroxycholesterol from cholesterol. This is Cholesterol 25-hydroxylase-like protein 1, member 1 (ch25hl1.1) from Danio rerio (Zebrafish).